We begin with the raw amino-acid sequence, 157 residues long: MRRAVCPGSFDPLHKGHVEVIARAANLFEEVVVAVSANPAKTYRFSVDERIAMIEATVSSLAGVAVRPMGPGLLAEFCRQIGADAIVKGLRGGADLEFEAPMAAMNRHLTGVETVYLPADARYTHVSSSLIKEVHGLGGDVAEFVPAAVLRGLDGGA.

A substrate-binding site is contributed by serine 9. ATP contacts are provided by residues 9–10 and histidine 17; that span reads SF. Residues lysine 41, leucine 74, and lysine 88 each coordinate substrate. ATP contacts are provided by residues 89–91, glutamate 99, and 123–129; these read GLR and YTHVSSS.

This sequence belongs to the bacterial CoaD family. Homohexamer. The cofactor is Mg(2+).

It localises to the cytoplasm. The enzyme catalyses (R)-4'-phosphopantetheine + ATP + H(+) = 3'-dephospho-CoA + diphosphate. The protein operates within cofactor biosynthesis; coenzyme A biosynthesis; CoA from (R)-pantothenate: step 4/5. In terms of biological role, reversibly transfers an adenylyl group from ATP to 4'-phosphopantetheine, yielding dephospho-CoA (dPCoA) and pyrophosphate. The chain is Phosphopantetheine adenylyltransferase from Micrococcus luteus (strain ATCC 4698 / DSM 20030 / JCM 1464 / CCM 169 / CCUG 5858 / IAM 1056 / NBRC 3333 / NCIMB 9278 / NCTC 2665 / VKM Ac-2230) (Micrococcus lysodeikticus).